An 81-amino-acid polypeptide reads, in one-letter code: Photosystem I iron-sulfur center (81 aa).

2 4Fe-4S ferredoxin-type domains span residues 2 to 31 (SHTV…MVPW) and 37 to 68 (GQIA…VRVY). 8 residues coordinate [4Fe-4S] cluster: Cys11, Cys14, Cys17, Cys21, Cys48, Cys51, Cys54, and Cys58.

As to quaternary structure, the eukaryotic PSI reaction center is composed of at least 11 subunits. [4Fe-4S] cluster is required as a cofactor.

It localises to the plastid. The protein localises to the chloroplast thylakoid membrane. It catalyses the reaction reduced [plastocyanin] + hnu + oxidized [2Fe-2S]-[ferredoxin] = oxidized [plastocyanin] + reduced [2Fe-2S]-[ferredoxin]. Functionally, apoprotein for the two 4Fe-4S centers FA and FB of photosystem I (PSI); essential for photochemical activity. FB is the terminal electron acceptor of PSI, donating electrons to ferredoxin. The C-terminus interacts with PsaA/B/D and helps assemble the protein into the PSI complex. Required for binding of PsaD and PsaE to PSI. PSI is a plastocyanin/cytochrome c6-ferredoxin oxidoreductase, converting photonic excitation into a charge separation, which transfers an electron from the donor P700 chlorophyll pair to the spectroscopically characterized acceptors A0, A1, FX, FA and FB in turn. This chain is Photosystem I iron-sulfur center, found in Thalassiosira pseudonana (Marine diatom).